The chain runs to 217 residues: Large ribosomal subunit protein uL3 (217 aa).

It belongs to the universal ribosomal protein uL3 family. In terms of assembly, part of the 50S ribosomal subunit. Forms a cluster with proteins L14 and L19.

In terms of biological role, one of the primary rRNA binding proteins, it binds directly near the 3'-end of the 23S rRNA, where it nucleates assembly of the 50S subunit. In Mycobacterium ulcerans (strain Agy99), this protein is Large ribosomal subunit protein uL3.